We begin with the raw amino-acid sequence, 291 residues long: Short-chain dehydrogenase/reductase GME11359 (291 aa).

NADP(+) contacts are provided by Leu-18, Asp-67, Asn-96, Tyr-177, Lys-181, and Val-209. Tyr-177 acts as the Proton acceptor in catalysis. Lys-181 (lowers pKa of active site Tyr) is an active-site residue.

This sequence belongs to the short-chain dehydrogenases/reductases (SDR) family.

It participates in secondary metabolite biosynthesis. Functionally, short-chain dehydrogenase/reductase; part of the gene cluster that mediates the biosynthesis of dibenzodioxocinones such as pestalotiollide B, a novel class of inhibitors against cholesterol ester transfer protein (CEPT). The biosynthesis initiates from condensation of acetate and malonate units catalyzed by the non-reducing PKS pks8/GME11356. Pks8/GME11356 lacks a thioesterase (TE) domain, which is important to the cyclizing of the third ring of atrochrysone carboxylic acid, and the esterase GME11355 might play the role of TE and catalyzes the cyclization reaction of the C ring. The lactamase-like protein GME11357 (or other beta-lactamases in Pestalotiopsis microspora) probably hydrolyzes the thioester bond between the ACP of pks8/GME11356 and the intermediate to release atrochrysone carboxylic acid, which is spontaneously dehydrates to form endocrocin anthrone. Endocrocin anthrone is further converted to emodin via the endocrocin intermediate. Emodin is then oxidized by several enzymes such as the Baeyer-Villiger oxidase GME11358, the oxidoreductase GME11367, the short chain dehydrogenase/reductase GME11373, as well as by other oxidoreductases from the cluster, to modify the A and C rings and open the B ring, and finally yield monodictyphenone. The prenyltransferase GME11375 may catalyze the addition reaction between the C5 side chains and the carbon bone of dibenzodioxocinones. The remaining biochemical reactions to the final product dibenzodioxocinones should be methylation catalyzed by methyltransferase GME11366 and reduction and lactonization reaction catalyzed by a series of oxidordeuctases. The polypeptide is Short-chain dehydrogenase/reductase GME11359 (Pestalotiopsis microspora).